Here is a 227-residue protein sequence, read N- to C-terminus: 7-cyano-7-deazaguanine synthase (227 aa).

ATP is bound at residue 16 to 26 (FSGGQDSTTCL). Residues Cys-194, Cys-202, Cys-205, and Cys-208 each coordinate Zn(2+).

Belongs to the QueC family. Requires Zn(2+) as cofactor.

It catalyses the reaction 7-carboxy-7-deazaguanine + NH4(+) + ATP = 7-cyano-7-deazaguanine + ADP + phosphate + H2O + H(+). The protein operates within purine metabolism; 7-cyano-7-deazaguanine biosynthesis. Functionally, catalyzes the ATP-dependent conversion of 7-carboxy-7-deazaguanine (CDG) to 7-cyano-7-deazaguanine (preQ(0)). The protein is 7-cyano-7-deazaguanine synthase of Haemophilus influenzae (strain 86-028NP).